Here is a 210-residue protein sequence, read N- to C-terminus: Large ribosomal subunit protein uL3 (210 aa).

The interval 134–153 (THGNSLSHRAPGSIGQNQTP) is disordered. The residue at position 151 (Gln-151) is an N5-methylglutamine.

This sequence belongs to the universal ribosomal protein uL3 family. Part of the 50S ribosomal subunit. Forms a cluster with proteins L14 and L19. Methylated by PrmB.

Its function is as follows. One of the primary rRNA binding proteins, it binds directly near the 3'-end of the 23S rRNA, where it nucleates assembly of the 50S subunit. The sequence is that of Large ribosomal subunit protein uL3 from Aeromonas salmonicida (strain A449).